We begin with the raw amino-acid sequence, 157 residues long: MIRVATAECFTHGFVAREIHAYSMGYPGGYSWSVDSDVVLVAGLFIPTLSGIRSILKFEPPEPSATLNDIKVYTEEEDERVALMMARSVRELTSADLGIGTTAGIGRGGIAVVSENREEVINSDVEADLRFSGAEEILMRQRSGIRCALELLESFLE.

Belongs to the UPF0254 family.

This chain is UPF0254 protein MTH_1148, found in Methanothermobacter thermautotrophicus (strain ATCC 29096 / DSM 1053 / JCM 10044 / NBRC 100330 / Delta H) (Methanobacterium thermoautotrophicum).